The following is a 229-amino-acid chain: uncharacterized protein (229 aa).

This is an uncharacterized protein from Mus musculus (Mouse).